Reading from the N-terminus, the 410-residue chain is Monoglucosyldiacylglycerol epimerase (410 aa).

A signal peptide spans 1-14; the sequence is MAMAWLMGLGLALA. A run of 2 helical transmembrane segments spans residues 71–91 and 96–116; these read ALVM…WQGF and LILA…SAIA. The active-site Proton acceptor is Tyr-320. The chain crosses the membrane as a helical span at residues 380–400; sequence IIVTINPITFIAFPVKEFFVS.

Belongs to the short-chain dehydrogenases/reductases (SDR) family.

It localises to the membrane. It carries out the reaction a 1,2-diacyl-3-O-(beta-D-glucopyranosyl)-sn-glycerol = a 1,2-diacyl-3-O-(beta-D-galactosyl)-sn-glycerol. In terms of biological role, involved in the biosynthesis of galactolipids found in the photosynthetic membranes. Catalyzes the isomerization of monoglucosyldiacylglycerol (GlcDG) to yield monogalactosyldiacylglycerol (MGDG). The polypeptide is Monoglucosyldiacylglycerol epimerase (Synechocystis sp. (strain ATCC 27184 / PCC 6803 / Kazusa)).